We begin with the raw amino-acid sequence, 481 residues long: Deoxyribodipyrimidine photo-lyase (481 aa).

In terms of domain architecture, Photolyase/cryptochrome alpha/beta spans 1-136; the sequence is MQLFWHRRDL…AHAQFHDAVH (136 aa). FAD is bound at residue Tyr-228. Position 232 (Arg-232) interacts with DNA. 240–244 contacts FAD; sequence TSRLS. 2 interaction with DNA regions span residues 283–290 and 349–350; these read QLAWREFY and NR. FAD is bound at residue 380–382; the sequence is DHD. Position 412 (Gln-412) interacts with DNA.

Belongs to the DNA photolyase class-1 family. In terms of assembly, monomer. FAD serves as cofactor. Coenzyme F420-(gamma-Glu)n is required as a cofactor.

The catalysed reaction is cyclobutadipyrimidine (in DNA) = 2 pyrimidine residues (in DNA).. In terms of biological role, involved in repair of UV radiation-induced DNA damage. Catalyzes the light-dependent monomerization (300-600 nm) of cyclobutyl pyrimidine dimers (in cis-syn configuration), which are formed between adjacent bases on the same DNA strand upon exposure to ultraviolet radiation. This Halobacterium salinarum (strain ATCC 700922 / JCM 11081 / NRC-1) (Halobacterium halobium) protein is Deoxyribodipyrimidine photo-lyase (phr).